Consider the following 62-residue polypeptide: Large ribosomal subunit protein bL33 (62 aa).

Belongs to the bacterial ribosomal protein bL33 family.

The protein is Large ribosomal subunit protein bL33 of Parabacteroides distasonis (strain ATCC 8503 / DSM 20701 / CIP 104284 / JCM 5825 / NCTC 11152).